A 55-amino-acid polypeptide reads, in one-letter code: Large ribosomal subunit protein bL33 (55 aa).

The protein belongs to the bacterial ribosomal protein bL33 family.

This Burkholderia ambifaria (strain MC40-6) protein is Large ribosomal subunit protein bL33.